A 376-amino-acid chain; its full sequence is Glutamate 5-kinase (376 aa).

Lys15 contributes to the ATP binding site. Residues Ser56, Asp143, and Asn155 each coordinate substrate. 175–176 (SD) lines the ATP pocket. The PUA domain maps to 281 to 358 (KGTLTIDAGA…PDVMMILGIT (78 aa)).

The protein belongs to the glutamate 5-kinase family.

The protein localises to the cytoplasm. The catalysed reaction is L-glutamate + ATP = L-glutamyl 5-phosphate + ADP. Its pathway is amino-acid biosynthesis; L-proline biosynthesis; L-glutamate 5-semialdehyde from L-glutamate: step 1/2. Catalyzes the transfer of a phosphate group to glutamate to form L-glutamate 5-phosphate. The protein is Glutamate 5-kinase of Rhodopseudomonas palustris (strain ATCC BAA-98 / CGA009).